The sequence spans 227 residues: MTNNLSGYRNKFVRVKTSRKRTVSSNNWLRRQLNDPYVAKARTQGFRSRAAYKLLEIHEKFKLFTPNMKIVDLGAAPGGWSQIASKLIKASDNSLNNKIISIDLLEIRPIVGVEFFQKDFFEEDTEKLIIQALDGKANIVMSDMASNTIGHKATDHIRTLLLCEQALEFALKVLKPSGHFIAKIFRGGAENKLLNKVKHEFRTVKHFKPLSSRSESTEIYLVALNKK.

5 residues coordinate S-adenosyl-L-methionine: glycine 78, tryptophan 80, aspartate 103, aspartate 119, and aspartate 143. The active-site Proton acceptor is lysine 183.

This sequence belongs to the class I-like SAM-binding methyltransferase superfamily. RNA methyltransferase RlmE family.

It localises to the cytoplasm. It catalyses the reaction uridine(2552) in 23S rRNA + S-adenosyl-L-methionine = 2'-O-methyluridine(2552) in 23S rRNA + S-adenosyl-L-homocysteine + H(+). Functionally, specifically methylates the uridine in position 2552 of 23S rRNA at the 2'-O position of the ribose in the fully assembled 50S ribosomal subunit. In Rickettsia canadensis (strain McKiel), this protein is Ribosomal RNA large subunit methyltransferase E.